Consider the following 718-residue polypeptide: Quinolinate synthase, chloroplastic (718 aa).

Positions 1–22 are enriched in low complexity; it reads MALALSVAPTSSSLSSLLSRTP. Residues 1-29 form a disordered region; it reads MALALSVAPTSSSLSSLLSRTPNPSPNFR. The N-terminal 70 residues, 1–70, are a transit peptide targeting the chloroplast; that stretch reads MALALSVAPT…VNASPFSISA (70 aa). Catalysis depends on C132, which acts as the Cysteine persulfide intermediate. Positions 280 and 306 each coordinate iminosuccinate. A [4Fe-4S] cluster-binding site is contributed by C360. Residues 389–391 and S411 each bind iminosuccinate; that span reads YIN. C484 provides a ligand contact to [4Fe-4S] cluster. Residues 510 to 512 and T535 each bind iminosuccinate; that span reads HLE. C640 serves as a coordination point for [4Fe-4S] cluster.

Belongs to the quinolinate synthase family. Type 1 subfamily. As to quaternary structure, homodimer. Interacts in vitro with NFS2, CpNIFS3 and AO. Part of a Cys defulfurase complex. It depends on [4Fe-4S] cluster as a cofactor. In terms of tissue distribution, expressed in roots, leaves, stems and flowers.

The protein resides in the plastid. Its subcellular location is the chloroplast. It catalyses the reaction iminosuccinate + dihydroxyacetone phosphate = quinolinate + phosphate + 2 H2O + H(+). It participates in cofactor biosynthesis; NAD(+) biosynthesis; quinolinate from iminoaspartate: step 1/1. In terms of biological role, catalyzes the condensation of iminoaspartate with dihydroxyacetone phosphate to form quinolinate. Can complement nadA-deficient E.coli mutant. Essential for the de novo synthesis of NAD. Also participates in cysteine desulfurization mediated by NFS2. Can activate the cysteine desulfurase activity of NFS2 in vitro. The sequence is that of Quinolinate synthase, chloroplastic from Arabidopsis thaliana (Mouse-ear cress).